A 508-amino-acid polypeptide reads, in one-letter code: Probable G-protein coupled receptor 101 (508 aa).

The Extracellular portion of the chain corresponds to 1–35; sequence MTSTCTNSTRESNSSHTCMPLSKMPISLAHGIIRS. N-linked (GlcNAc...) asparagine glycans are attached at residues Asn-7 and Asn-13. A helical transmembrane segment spans residues 36–56; that stretch reads TVLVIFLAASFVGNIVLALVL. Topologically, residues 57–68 are cytoplasmic; the sequence is QRKPQLLQVTNR. A helical membrane pass occupies residues 69 to 89; sequence FIFNLLVTDLLQISLVAPWVV. The Extracellular segment spans residues 90 to 106; sequence ATSVPLFWPLNSHFCTA. Cys-104 and Cys-182 are oxidised to a cystine. A helical transmembrane segment spans residues 107-127; that stretch reads LVSLTHLFAFASVNTIVVVSV. The Cytoplasmic segment spans residues 128–149; sequence DRYLSIIHPLSYPSKMTQRRGY. A helical membrane pass occupies residues 150–170; it reads LLLYGTWIVAILQSTPPLYGW. At 171-196 the chain is on the extracellular side; that stretch reads GQAAFDERNALCSMIWGASPSYTILS. A helical transmembrane segment spans residues 197–217; it reads VVSFIVIPLIVMIACYSVVFC. The Cytoplasmic portion of the chain corresponds to 218 to 399; sequence AARRQHALLY…PRCYQCKAAK (182 aa). Residues 244-338 form a disordered region; that stretch reads NEDEEGAEKK…ENSMKADKGR (95 aa). Composition is skewed to basic and acidic residues over residues 250–288 and 318–338; these read AEKK…KAKE and MEGK…DKGR. A helical transmembrane segment spans residues 400–420; sequence VIFIIIFSYVLSLGPYCFLAV. The Extracellular segment spans residues 421-433; that stretch reads LAVWVDVETQVPQ. A helical membrane pass occupies residues 434-454; that stretch reads WVITIIIWLFFLQCCIHPYVY. Topologically, residues 455–508 are cytoplasmic; that stretch reads GYMHKTIKKEIQDMLKKFFCKEKPPKEDSHPDLPGTEGGTEGKIVPSYDSATFP. The span at 476–485 shows a compositional bias: basic and acidic residues; the sequence is EKPPKEDSHP. The interval 476–508 is disordered; it reads EKPPKEDSHPDLPGTEGGTEGKIVPSYDSATFP.

It belongs to the G-protein coupled receptor 1 family.

The protein localises to the cell membrane. In terms of biological role, orphan receptor. The polypeptide is Probable G-protein coupled receptor 101 (GPR101) (Homo sapiens (Human)).